Here is a 328-residue protein sequence, read N- to C-terminus: Putative gluconeogenesis factor (328 aa).

Belongs to the gluconeogenesis factor family.

Its subcellular location is the cytoplasm. Its function is as follows. Required for morphogenesis under gluconeogenic growth conditions. The sequence is that of Putative gluconeogenesis factor from Aquifex aeolicus (strain VF5).